The following is a 435-amino-acid chain: Chromosomal replication initiator protein DnaA (435 aa).

Residues 1-70 are domain I, interacts with DnaA modulators; sequence MNIGEKILLL…KHLFEIQNSI (70 aa). The domain II stretch occupies residues 70-98; sequence IKVDVSILLKNQVESKKAEQKSVQKQQHS. Residues 99–313 form a domain III, AAA+ region region; the sequence is LLNPSHTFEN…GILSKLHAYS (215 aa). ATP contacts are provided by G143, G145, K146, and T147. The segment at 314–435 is domain IV, binds dsDNA; the sequence is QLMHVDIDLQ…ELTNKITSSS (122 aa).

Belongs to the DnaA family. Oligomerizes as a right-handed, spiral filament on DNA at oriC.

Its subcellular location is the cytoplasm. Functionally, plays an essential role in the initiation and regulation of chromosomal replication. ATP-DnaA binds to the origin of replication (oriC) to initiate formation of the DNA replication initiation complex once per cell cycle. Binds the DnaA box (a 9 base pair repeat at the origin) and separates the double-stranded (ds)DNA. Forms a right-handed helical filament on oriC DNA; dsDNA binds to the exterior of the filament while single-stranded (ss)DNA is stabiized in the filament's interior. The ATP-DnaA-oriC complex binds and stabilizes one strand of the AT-rich DNA unwinding element (DUE), permitting loading of DNA polymerase. After initiation quickly degrades to an ADP-DnaA complex that is not apt for DNA replication. Binds acidic phospholipids. This is Chromosomal replication initiator protein DnaA from Sulfurimonas denitrificans (strain ATCC 33889 / DSM 1251) (Thiomicrospira denitrificans (strain ATCC 33889 / DSM 1251)).